Consider the following 925-residue polypeptide: Serine/threonine-protein kinase PLK4 (925 aa).

The Protein kinase domain occupies 12–265; sequence FKVGNLLGKG…LSSVLDHPFM (254 aa). ATP-binding positions include 18–26 and Lys41; that span reads LGKGSFAGV. Residues Lys45 and Lys46 each carry the N6-acetyllysine modification. Catalysis depends on Asp136, which acts as the Proton acceptor. Disordered regions lie at residues 262–283 and 328–394; these read HPFM…EDSM and KNSS…KTYS. Over residues 330 to 341 the composition is skewed to low complexity; that stretch reads SSDFSSGDGSNF. The segment covering 342–353 has biased composition (polar residues); that stretch reads CTQWGNPEQEAN. Basic and acidic residues predominate over residues 359–369; the sequence is RVIEDAEERPH. Polar residues predominate over residues 381–391; sequence RASPSNQSRAK. Ser400 bears the Phosphoserine mark. A disordered region spans residues 517–538; it reads EVMPQEPGLHPHSEQSKNRSME. Basic and acidic residues predominate over residues 525-536; sequence LHPHSEQSKNRS. One can recognise a Cryptic POLO box 1 (CPB1) domain in the interval 547–660; the sequence is TLRSITSPLI…SRFIQLVRSK (114 aa). The Cryptic POLO box 2 (CPB2) domain occupies 661–774; sequence TPKITYFTRY…GRKPGNTSSP (114 aa). Ser778 carries the post-translational modification Phosphoserine. A POLO box domain is found at 841–919; sequence QLLKSVFVKN…LSSILLMFSN (79 aa).

Belongs to the protein kinase superfamily. Ser/Thr protein kinase family. CDC5/Polo subfamily. As to quaternary structure, homodimer. Interacts with CEP152 (via N-terminus). Interacts with CEP78; this interaction may be important for proper PLK4 localization to the centriole and PLK4-induced overduplication of centrioles. Interacts with CEP131. Interacts simultaneously with TENT5C and CEP192. Interacts with TENT5C; this interaction leads to the TENT5C recruitment in the centrosome. Interacts with CEP85; this interaction may be important in cell migration and centriole assembly. In terms of processing, ubiquitinated; leading to its degradation by the proteasome. Deubiquitinated by USP54; leading to PLK4 stabilization. Post-translationally, tyrosine-phosphorylated by TEC. Acetylation by KAT2A and KAT2B impairs kinase activity by shifting the kinase to an inactive conformation. As to expression, expressed in tissues associated with mitotic and meiotic cell division. Highly expressed in testis.

It localises to the cytoplasm. Its subcellular location is the cytoskeleton. The protein resides in the microtubule organizing center. It is found in the centrosome. The protein localises to the centriole. It localises to the nucleus. Its subcellular location is the nucleolus. The protein resides in the cleavage furrow. The enzyme catalyses L-seryl-[protein] + ATP = O-phospho-L-seryl-[protein] + ADP + H(+). It catalyses the reaction L-threonyl-[protein] + ATP = O-phospho-L-threonyl-[protein] + ADP + H(+). In terms of biological role, serine/threonine-protein kinase that plays a central role in centriole duplication. Able to trigger procentriole formation on the surface of the parental centriole cylinder, leading to the recruitment of centriole biogenesis proteins such as SASS6, CPAP, CCP110, CEP135 and gamma-tubulin. When overexpressed, it is able to induce centrosome amplification through the simultaneous generation of multiple procentrioles adjoining each parental centriole during S phase. Phosphorylates 'Ser-151' of FBXW5 during the G1/S transition, leading to inhibit FBXW5 ability to ubiquitinate SASS6. Its central role in centriole replication suggests a possible role in tumorigenesis, centrosome aberrations being frequently observed in tumors. Phosphorylates CDC25C and CHEK2. Also involved in deuterosome-mediated centriole amplification in multiciliated that can generate more than 100 centrioles. Also involved in trophoblast differentiation by phosphorylating HAND1, leading to disrupt the interaction between HAND1 and MDFIC and activate HAND1. Required for the recruitment of STIL to the centriole and for STIL-mediated centriole amplification. Phosphorylates CEP131 at 'Ser-78' and PCM1 at 'Ser-372' which is essential for proper organization and integrity of centriolar satellites. The protein is Serine/threonine-protein kinase PLK4 of Mus musculus (Mouse).